The primary structure comprises 76 residues: MQLALAAKYIGAGISTIGLIGAGIGIGIVFAALINGVSRNPSLKDTLFSYSILGMALSEATGLFCLMISFMLLFAV.

2 helical membrane passes run 14-34 (ISTIGLIGAGIGIGIVFAALI) and 56-76 (ALSEATGLFCLMISFMLLFAV).

The protein belongs to the ATPase C chain family. As to quaternary structure, F-type ATPases have 2 components, CF(1) - the catalytic core - and CF(0) - the membrane proton channel. CF(1) has five subunits: alpha(3), beta(3), gamma(1), delta(1), epsilon(1). CF(0) has three main subunits: a, b and c.

It is found in the mitochondrion membrane. Its function is as follows. Mitochondrial membrane ATP synthase (F(1)F(0) ATP synthase or Complex V) produces ATP from ADP in the presence of a proton gradient across the membrane which is generated by electron transport complexes of the respiratory chain. F-type ATPases consist of two structural domains, F(1) - containing the extramembraneous catalytic core and F(0) - containing the membrane proton channel, linked together by a central stalk and a peripheral stalk. During catalysis, ATP synthesis in the catalytic domain of F(1) is coupled via a rotary mechanism of the central stalk subunits to proton translocation. Part of the complex F(0) domain. A homomeric c-ring of probably 10 subunits is part of the complex rotary element. This Candida glabrata (strain ATCC 2001 / BCRC 20586 / JCM 3761 / NBRC 0622 / NRRL Y-65 / CBS 138) (Yeast) protein is ATP synthase subunit 9, mitochondrial (ATP9).